Consider the following 590-residue polypeptide: Pentatricopeptide repeat-containing protein At1g63070, mitochondrial (590 aa).

A mitochondrion-targeting transit peptide spans 1–34 (MMRSVAVIGKKCLHRHTVLLKGNPRTTLCWERSF). PPR repeat units follow at residues 74–108 (SIVE…GISH), 109–143 (NLYT…GYGP), 144–178 (SIVT…GYQP), 179–213 (DTVT…GCQP), 214–248 (DLVT…KIEA), 249–283 (DVVI…GIKP), 284–318 (DVFT…NINP), 319–353 (DLVF…KHCF), 355–389 (DVVA…GLVG), 390–424 (NTVT…GVHP), 425–459 (DIMT…DMKL), 460–494 (DIVT…GVKP), 495–529 (NVVT…GPLP), and 530–564 (NSGT…GFAG).

Belongs to the PPR family. P subfamily.

The protein resides in the mitochondrion. The chain is Pentatricopeptide repeat-containing protein At1g63070, mitochondrial from Arabidopsis thaliana (Mouse-ear cress).